The primary structure comprises 370 residues: Thiamine-repressible mitochondrial transport protein THI74 (370 aa).

The Cytoplasmic portion of the chain corresponds to 1-10 (MNRVGIDVDH). Residues 11-31 (MIGVLLLAVVVVFWVGASCLT) traverse the membrane as a helical segment. Over 32-42 (NELLETNAYNK) the chain is Mitochondrial intermembrane. A helical membrane pass occupies residues 43–63 (PFFLTYLNISSFALYLTPDLW). Residues 64–119 (RIIQSRRKSLQERTERTLPIHTQESFSEFLPLLSSTPSTSSNLSSIADTKVKDTMR) lie on the Cytoplasmic side of the membrane. A helical transmembrane segment spans residues 120–140 (LSLLFCVLWFVANLAANAALS). Residues 129-190 (FVANLAANAA…SLFGIILIVM (62 aa)) form the EamA domain. The Mitochondrial intermembrane segment spans residues 141–146 (YTTVAS). Residues 147-167 (STILSSTSSFFTLFLATSLGI) form a helical membrane-spanning segment. Over 168–169 (ET) the chain is Cytoplasmic. Residues 170–190 (FSTKKLLGLFVSLFGIILIVM) traverse the membrane as a helical segment. Topologically, residues 191–203 (QSSKQQDSVSASS) are mitochondrial intermembrane. Residues 204–224 (FLVGNTLALLGSLGYSVYTTL) traverse the membrane as a helical segment. The Cytoplasmic segment spans residues 225–239 (LKYEISSKGLRLDIQ). The helical transmembrane segment at 240–260 (MFLGYVGIFTFLLFWPILIIL) threads the bilayer. At 261–273 (DITHMETFELPSN) the chain is on the mitochondrial intermembrane side. Residues 274–294 (FHISFLVMLNCIIIFVSDYFW) traverse the membrane as a helical segment. Residues 295 to 303 (CKALILTSP) are Cytoplasmic-facing. The helical transmembrane segment at 304–324 (LVVTVALTFTIPLAMFADFVW) threads the bilayer. Topologically, residues 325–326 (RE) are mitochondrial intermembrane. The chain crosses the membrane as a helical span at residues 327–347 (AFFTPWYIIGVIFIFVSFFLV). Residues 348–370 (NHRGESAVEKDCAAVEKGPILDA) are Cytoplasmic-facing.

It localises to the mitochondrion membrane. In terms of biological role, may be involved in thiaminediphosphate transport across the mitochondrial membrane. In Saccharomyces cerevisiae (strain ATCC 204508 / S288c) (Baker's yeast), this protein is Thiamine-repressible mitochondrial transport protein THI74 (THI74).